The following is an 854-amino-acid chain: V-type proton ATPase 116 kDa subunit a 2 (854 aa).

Topologically, residues 1–393 are cytoplasmic; it reads MGSLFRSETM…DAYGVGSYQE (393 aa). A helical membrane pass occupies residues 394–412; it reads VNPALFTIITFPFLFAVMF. Residues 413–414 are Vacuolar-facing; sequence GD. The chain crosses the membrane as a helical span at residues 415–431; the sequence is FGHGFVMFLFALLLVLN. The Cytoplasmic segment spans residues 432–445; it reads ENHPRLNQSQEIMR. Residues 446-475 form a helical membrane-spanning segment; that stretch reads MFFNGRYILLLMGLFSVYTGLIYNDCFSKS. Over 476 to 549 the chain is Vacuolar; that stretch reads VNLFGSRWNV…ATNRLTFLNS (74 aa). A helical transmembrane segment spans residues 550–569; sequence FKMKMSVILGITHMTFGVIL. Residues 570–587 lie on the Cytoplasmic side of the membrane; the sequence is GIFNHLHFRKKFNICLVS. A helical membrane pass occupies residues 588–608; that stretch reads IPELLFMLCIFGYLIFMIIYK. The Vacuolar portion of the chain corresponds to 609–651; that stretch reads WLVYSAETSRTAPSILIEFISMFLFLASDTGGLYPGQEHVQRL. The helical transmembrane segment at 652–671 threads the bilayer; that stretch reads LLLITVLSVPVLFLGKPLFL. Residues 672-739 are Cytoplasmic-facing; that stretch reads LWLHRGRSCF…EILMTQIIHS (68 aa). A phosphoserine mark is found at S695 and S700. The helical transmembrane segment at 740 to 764 threads the bilayer; it reads IEYCLGCISNTASYLRLWALSLAHA. Over 765 to 785 the chain is Vacuolar; the sequence is QLSEVLWAMLMHVGLRVDTAY. The chain crosses the membrane as a helical span at residues 786–824; the sequence is GVLVLLPVIAFFAVLTIFILLIMEGLSAFLHAIRLHWVE. Over 825-854 the chain is Cytoplasmic; sequence FQNKFYVGAGTKFVPFSFRLLSSKFSDDLA.

The protein belongs to the V-ATPase 116 kDa subunit family. As to quaternary structure, V-ATPase is a heteromultimeric enzyme made up of two complexes: the ATP-hydrolytic V1 complex and the proton translocation V0 complex. The V1 complex consists of three catalytic AB heterodimers that form a heterohexamer, three peripheral stalks each consisting of EG heterodimers, one central rotor including subunits D and F, and the regulatory subunits C and H. The proton translocation complex V0 consists of the proton transport subunit a, a ring of proteolipid subunits c9c'', rotary subunit d, subunits e and f, and the accessory subunits ATP6AP1/Ac45 and ATP6AP2/PRR. Directly interacts with PSCD2 through its N-terminal cytosolic tail in an intra-endosomal acidification-dependent manner. Disruption of this interaction results in the inhibition of endocytosis. Interacts with SPAAR. In terms of tissue distribution, highly expressed in lung, kidney and spleen.

It is found in the cell membrane. The protein localises to the endosome membrane. Functionally, subunit of the V0 complex of vacuolar(H+)-ATPase (V-ATPase), a multisubunit enzyme composed of a peripheral complex (V1) that hydrolyzes ATP and a membrane integral complex (V0) that translocates protons. V-ATPase is responsible for acidifying and maintaining the pH of intracellular compartments and in some cell types, is targeted to the plasma membrane, where it is responsible for acidifying the extracellular environment. Essential component of the endosomal pH-sensing machinery. May play a role in maintaining the Golgi functions, such as glycosylation maturation, by controlling the Golgi pH. In aerobic conditions, involved in intracellular iron homeostasis, thus triggering the activity of Fe(2+) prolyl hydroxylase (PHD) enzymes, and leading to HIF1A hydroxylation and subsequent proteasomal degradation. In Bos taurus (Bovine), this protein is V-type proton ATPase 116 kDa subunit a 2 (ATP6V0A2).